We begin with the raw amino-acid sequence, 284 residues long: RNase adapter protein RapZ (284 aa).

8-15 contributes to the ATP binding site; the sequence is GRSGSGKS. Residue 56 to 59 participates in GTP binding; it reads DVRN. The interval 266 to 284 is RNA-binding; that stretch reads RSRGKNVQSRHRTLEKRKS.

The protein belongs to the RapZ-like family. RapZ subfamily. As to quaternary structure, homotrimer.

Modulates the synthesis of GlmS, by affecting the processing and stability of the regulatory small RNA GlmZ. When glucosamine-6-phosphate (GlcN6P) concentrations are high in the cell, RapZ binds GlmZ and targets it to cleavage by RNase E. Consequently, GlmZ is inactivated and unable to activate GlmS synthesis. Under low GlcN6P concentrations, RapZ is sequestered and inactivated by an other regulatory small RNA, GlmY, preventing GlmZ degradation and leading to synthesis of GlmS. This chain is RNase adapter protein RapZ, found in Klebsiella oxytoca.